Consider the following 123-residue polypeptide: Small ribosomal subunit protein uS13 (123 aa).

The segment at 97-123 (PVRGQRTHTNAKTRKGRSKLPVAAKKK) is disordered.

Belongs to the universal ribosomal protein uS13 family. In terms of assembly, part of the 30S ribosomal subunit. Forms a loose heterodimer with protein S19. Forms two bridges to the 50S subunit in the 70S ribosome.

In terms of biological role, located at the top of the head of the 30S subunit, it contacts several helices of the 16S rRNA. In the 70S ribosome it contacts the 23S rRNA (bridge B1a) and protein L5 of the 50S subunit (bridge B1b), connecting the 2 subunits; these bridges are implicated in subunit movement. Contacts the tRNAs in the A and P-sites. The polypeptide is Small ribosomal subunit protein uS13 (Ehrlichia chaffeensis (strain ATCC CRL-10679 / Arkansas)).